Consider the following 192-residue polypeptide: UPF0312 protein PSPTO_5071 (192 aa).

The signal sequence occupies residues 1–23; it reads MLKKSLAALALGTALLSAGQAMA.

The protein belongs to the UPF0312 family. Type 1 subfamily.

It localises to the periplasm. The chain is UPF0312 protein PSPTO_5071 from Pseudomonas syringae pv. tomato (strain ATCC BAA-871 / DC3000).